Consider the following 250-residue polypeptide: MARYDRAITVFSPDGHLFQVEYALEAVRKGNAAVGVRGTDTVVLAVEKKSTPKLQDSRSARKIVSLDNHIALACAGLKADARVLINKARIECQSHRLTLEDPVTVEYITRYIAGLQQKYTQSGGVRPFGLSTLIVGFDPYSRLPSLYQTDPSGTFSAWKANATGRNSNSIREFLEKNYKESSGQETIKLAIRALLEVVESGGKNIEVAVMTREETGLRQLEEAEIDAIVAKIEAEKAAAEAAKKGPPKET.

Lysine 62 participates in a covalent cross-link: Glycyl lysine isopeptide (Lys-Gly) (interchain with G-Cter in ubiquitin).

The protein belongs to the peptidase T1A family. Component of the 20S core complex of the 26S proteasome. The 26S proteasome is composed of a core protease (CP), known as the 20S proteasome, capped at one or both ends by the 19S regulatory particle (RP/PA700). The 20S proteasome core is composed of 28 subunits that are arranged in four stacked rings, resulting in a barrel-shaped structure. The two end rings are each formed by seven alpha subunits, and the two central rings are each formed by seven beta subunits. The catalytic chamber with the active sites is on the inside of the barrel.

The protein resides in the cytoplasm. The protein localises to the nucleus. In terms of biological role, the proteasome is a multicatalytic proteinase complex which is characterized by its ability to cleave peptides with Arg, Phe, Tyr, Leu, and Glu adjacent to the leaving group at neutral or slightly basic pH. The proteasome has an ATP-dependent proteolytic activity. In Arabidopsis thaliana (Mouse-ear cress), this protein is Proteasome subunit alpha type-7-B (PAD2).